We begin with the raw amino-acid sequence, 182 residues long: Large ribosomal subunit protein uL6 (182 aa).

It belongs to the universal ribosomal protein uL6 family. As to quaternary structure, part of the 50S ribosomal subunit.

Its function is as follows. This protein binds to the 23S rRNA, and is important in its secondary structure. It is located near the subunit interface in the base of the L7/L12 stalk, and near the tRNA binding site of the peptidyltransferase center. This Caldicellulosiruptor bescii (strain ATCC BAA-1888 / DSM 6725 / KCTC 15123 / Z-1320) (Anaerocellum thermophilum) protein is Large ribosomal subunit protein uL6.